A 316-amino-acid polypeptide reads, in one-letter code: Thymidylate synthase (316 aa).

DUMP-binding positions include Arg23 and 178–179; that span reads RR. Catalysis depends on Cys198, which acts as the Nucleophile. Residues 218 to 221, Asn229, and 259 to 261 contribute to the dUMP site; these read RSGD and HIY. Residue Asp221 coordinates (6R)-5,10-methylene-5,6,7,8-tetrahydrofolate. A (6R)-5,10-methylene-5,6,7,8-tetrahydrofolate-binding site is contributed by Ala315.

This sequence belongs to the thymidylate synthase family. Bacterial-type ThyA subfamily. Homodimer.

It localises to the cytoplasm. It catalyses the reaction dUMP + (6R)-5,10-methylene-5,6,7,8-tetrahydrofolate = 7,8-dihydrofolate + dTMP. It functions in the pathway pyrimidine metabolism; dTTP biosynthesis. Functionally, catalyzes the reductive methylation of 2'-deoxyuridine-5'-monophosphate (dUMP) to 2'-deoxythymidine-5'-monophosphate (dTMP) while utilizing 5,10-methylenetetrahydrofolate (mTHF) as the methyl donor and reductant in the reaction, yielding dihydrofolate (DHF) as a by-product. This enzymatic reaction provides an intracellular de novo source of dTMP, an essential precursor for DNA biosynthesis. The sequence is that of Thymidylate synthase from Pediococcus pentosaceus (strain ATCC 25745 / CCUG 21536 / LMG 10740 / 183-1w).